A 255-amino-acid polypeptide reads, in one-letter code: MKVDLNSDLGESFGRYKLGLDEEVMKYITSANVATGWHAGDPLVMRKTVRLAKEKGVAVGAHPGYPDLLGFGRRYMKLTPEEARNYILYQIGALHAFTKAEGMELQHVKPHGALYNALVKDEELARAVIEGITDFDRRIIFVMLSGSRPAEIAEEMGLKVAHEVFADRAYNPDGTLVLRGKPGAVIHDKELIAERVVSMVKDGGVKAINGEWIELRADTICVHGDNPKAVEIAAYIRRVLEDEGINVVPMGEFIR.

The protein belongs to the LamB/PxpA family. As to quaternary structure, forms a complex composed of PxpA, PxpB and PxpC.

The enzyme catalyses 5-oxo-L-proline + ATP + 2 H2O = L-glutamate + ADP + phosphate + H(+). In terms of biological role, catalyzes the cleavage of 5-oxoproline to form L-glutamate coupled to the hydrolysis of ATP to ADP and inorganic phosphate. The polypeptide is 5-oxoprolinase subunit A (Thermococcus onnurineus (strain NA1)).